Consider the following 132-residue polypeptide: Ribonuclease VapC15 (132 aa).

The 121-residue stretch at 1-121 (MIVDTSVWIA…HRDRDYEAIR (121 aa)) folds into the PINc domain. Aspartate 96 is a binding site for Mg(2+). Aspartate 96, aspartate 114, and aspartate 116 together coordinate Mn(2+).

This sequence belongs to the PINc/VapC protein family. Crystallizes as a VapB15-VapC15(2) heterotrimer and as a VapB15(2)-VapC15(2) heterotetramer; each toxin pair forms a homodimer which creates a channel in which the antitoxin binds. Requires Mg(2+) as cofactor. Mn(2+) serves as cofactor.

With respect to regulation, RNase activity inhibited by EDTA. Functionally, toxic component of a type II toxin-antitoxin (TA) system. Degrades total E.coli RNA, which is partially inhibited by cognate antitoxin VapB15. Upon expression in M.smegmatis inhibits colony formation, which is neutralized by coexpression with VapB15. The chain is Ribonuclease VapC15 from Mycobacterium tuberculosis (strain ATCC 25618 / H37Rv).